Reading from the N-terminus, the 1938-residue chain is Myosin-4 (1938 aa).

The region spanning 33-82 (DAKSSVFVADPKESFVKATVQSREGGKVTAKTEAGATVTVKEDQVFPMNP) is the Myosin N-terminal SH3-like domain. Ser36 carries the post-translational modification Phosphoserine. Phosphothreonine is present on residues Thr64 and Thr69. The 696-residue stretch at 86 to 781 (DKIEDMAMMT…LLGLLEEMRD (696 aa)) folds into the Myosin motor domain. 179–186 (GESGAGKT) contacts ATP. Tyr389 carries the phosphotyrosine modification. Ser392 is modified (phosphoserine). Phosphothreonine is present on Thr419. Phosphotyrosine is present on Tyr424. Residues 658–680 (LNKLMTNLRSTHPHFVRCIIPNE) form an actin-binding region. Position 756 is a pros-methylhistidine (His756). Residues 760–774 (KFGHTKVFFKAGLLG) form an actin-binding region. The region spanning 784–813 (LAQLITRTQAMCRGFLARVEYKKMVERRES) is the IQ domain. Positions 845 to 1926 (SAETEKEMAN…ESQVNKLRVK (1082 aa)) form a coiled coil. A phosphoserine mark is found at Ser1091, Ser1095, Ser1161, and Ser1236. Thr1240 is modified (phosphothreonine). Position 1242 is a phosphoserine (Ser1242). Residue Thr1254 is modified to Phosphothreonine. Ser1260 is subject to Phosphoserine. Thr1264 is subject to Phosphothreonine. Ser1277 bears the Phosphoserine mark. A Phosphothreonine modification is found at Thr1285. Ser1287, Ser1291, Ser1302, and Ser1305 each carry phosphoserine. The residue at position 1463 (Tyr1463) is a Phosphotyrosine. Thr1466 carries the phosphothreonine modification. Ser1473 is modified (phosphoserine). Residue Tyr1491 is modified to Phosphotyrosine. Residue Ser1494 is modified to Phosphoserine. Phosphothreonine is present on Thr1500. Ser1513 carries the post-translational modification Phosphoserine. Thr1516 carries the post-translational modification Phosphothreonine. Phosphoserine occurs at positions 1541, 1553, 1573, 1599, 1602, 1713, and 1725. Phosphothreonine is present on residues Thr1729 and Thr1735. Ser1738 carries the phosphoserine modification.

Belongs to the TRAFAC class myosin-kinesin ATPase superfamily. Myosin family. In terms of assembly, muscle myosin is a hexameric protein that consists of 2 heavy chain subunits (MHC), 2 alkali light chain subunits (MLC) and 2 regulatory light chain subunits (MLC-2).

The protein resides in the cytoplasm. It is found in the myofibril. Muscle contraction. This Oryctolagus cuniculus (Rabbit) protein is Myosin-4 (MYH4).